Here is a 72-residue protein sequence, read N- to C-terminus: TKCYKTGDRIISEACPPGQDLCYMKTWCDVFCGTRGRVIELGCTATCPTVKPHEQITCCSTDNCDPHHKMLQ.

Cystine bridges form between C3–C22, C15–C43, C28–C32, C47–C58, and C59–C64.

Belongs to the three-finger toxin family. Long-chain subfamily. Type II alpha-neurotoxin sub-subfamily. In terms of tissue distribution, expressed by the venom gland.

It is found in the secreted. Its function is as follows. Binds with high affinity to muscular (alpha-1/CHRNA1) and neuronal (alpha-7/CHRNA7) nicotinic acetylcholine receptor (nAChR) and inhibits acetylcholine from binding to the receptor, thereby impairing neuromuscular and neuronal transmission. In Ophiophagus hannah (King cobra), this protein is Long neurotoxin OH-5.